The sequence spans 322 residues: Deoxycytidylate deaminase (322 aa).

The region spanning 173–311 (SWDSYFMEMA…SLLQAAGVQL (139 aa)) is the CMP/dCMP-type deaminase domain. H246 serves as a coordination point for Zn(2+). The active-site Proton donor is E248. Positions 273 and 276 each coordinate Zn(2+).

It belongs to the cytidine and deoxycytidylate deaminase family. The cofactor is Zn(2+).

It localises to the cytoplasm. The protein resides in the nucleus. The enzyme catalyses dCMP + H2O + H(+) = dUMP + NH4(+). Functionally, supplies the nucleotide substrate for thymidylate synthetase. The polypeptide is Deoxycytidylate deaminase (Schizosaccharomyces pombe (strain 972 / ATCC 24843) (Fission yeast)).